We begin with the raw amino-acid sequence, 1400 residues long: DNA-directed RNA polymerase subunit beta' (1400 aa).

Cysteine 71, cysteine 73, cysteine 86, and cysteine 89 together coordinate Zn(2+). The Mg(2+) site is built by aspartate 462, aspartate 464, and aspartate 466. Residues cysteine 811, cysteine 885, cysteine 892, and cysteine 895 each contribute to the Zn(2+) site.

The protein belongs to the RNA polymerase beta' chain family. The RNAP catalytic core consists of 2 alpha, 1 beta, 1 beta' and 1 omega subunit. When a sigma factor is associated with the core the holoenzyme is formed, which can initiate transcription. Mg(2+) serves as cofactor. Zn(2+) is required as a cofactor.

It carries out the reaction RNA(n) + a ribonucleoside 5'-triphosphate = RNA(n+1) + diphosphate. In terms of biological role, DNA-dependent RNA polymerase catalyzes the transcription of DNA into RNA using the four ribonucleoside triphosphates as substrates. This Brucella canis (strain ATCC 23365 / NCTC 10854 / RM-666) protein is DNA-directed RNA polymerase subunit beta'.